Reading from the N-terminus, the 301-residue chain is UBX domain-containing protein 2 (301 aa).

The interval methionine 1–histidine 61 is disordered. Residues threonine 89–valine 153 enclose the SEP domain. Residues glycine 176 to alanine 200 are disordered. The span at serine 178–threonine 192 shows a compositional bias: low complexity. Positions methionine 218 to lysine 295 constitute a UBX domain.

This sequence belongs to the NSFL1C family. Interacts with cdc-48.1 (via N-terminus) and cdc-48.2 (via N-terminus). Interacts with kinase air-1. As to expression, expressed in the germline (at protein level). Expressed in spermatocytes but not in mature sperm (at protein level). Ubiquitously expressed. Predominantly expressed in the spermatheca.

It localises to the cytoplasm. The protein localises to the perinuclear region. The protein resides in the nucleus. Its subcellular location is the cytoskeleton. It is found in the microtubule organizing center. It localises to the centrosome. Ubiquitin-binding protein which acts as an adapter for ATPase cdc-48.1 and/or cdc-48.2, conferring substrate specificity. Together with ubxn-2 and ubxn-3, plays a role in hermaphrodite spermatogenesis probably by promoting the degradation of sex determination terminal factor tra-1. Probably in association with ATPase cdc-48.1 or/and cdc-48.2, regulates the centrosomal levels of kinase air-1 levels during mitotic progression by promoting air-1 removal from centrosomes in prophase. Also, regulates spindle orientation in the one-cell embryo by controlling centration and rotation of the pronuclei-centrosome complex in prophase. This is UBX domain-containing protein 2 from Caenorhabditis elegans.